The chain runs to 323 residues: Beta-ketoacyl-[acyl-carrier-protein] synthase III (323 aa).

Catalysis depends on residues Cys113 and His250. Positions 251-255 are ACP-binding; sequence QANRR. Asn280 is a catalytic residue.

Belongs to the thiolase-like superfamily. FabH family. Homodimer.

Its subcellular location is the cytoplasm. The enzyme catalyses malonyl-[ACP] + acetyl-CoA + H(+) = 3-oxobutanoyl-[ACP] + CO2 + CoA. Its pathway is lipid metabolism; fatty acid biosynthesis. In terms of biological role, catalyzes the condensation reaction of fatty acid synthesis by the addition to an acyl acceptor of two carbons from malonyl-ACP. Catalyzes the first condensation reaction which initiates fatty acid synthesis and may therefore play a role in governing the total rate of fatty acid production. Possesses both acetoacetyl-ACP synthase and acetyl transacylase activities. Its substrate specificity determines the biosynthesis of branched-chain and/or straight-chain of fatty acids. The sequence is that of Beta-ketoacyl-[acyl-carrier-protein] synthase III from Rhizobium meliloti (strain 1021) (Ensifer meliloti).